Here is a 93-residue protein sequence, read N- to C-terminus: Ferredoxin-2 (93 aa).

Residues 2-91 enclose the 2Fe-2S ferredoxin-type domain; that stretch reads YKVTLKTPDG…DVVIETHKED (90 aa). 4 residues coordinate [2Fe-2S] cluster: Cys-37, Cys-42, Cys-45, and Cys-75.

Belongs to the 2Fe2S plant-type ferredoxin family. [2Fe-2S] cluster is required as a cofactor.

The protein localises to the plastid. It is found in the chloroplast. In terms of biological role, ferredoxins are iron-sulfur proteins that transfer electrons in a wide variety of metabolic reactions. The chain is Ferredoxin-2 from Equisetum telmateia (Great horsetail).